We begin with the raw amino-acid sequence, 132 residues long: DNA-directed RNA polymerase subunit omega (132 aa).

Residues 90-109 (SSEAGGVLGTSSEEEGSSFD) are disordered.

It belongs to the RNA polymerase subunit omega family. In terms of assembly, the RNAP catalytic core consists of 2 alpha, 1 beta, 1 beta' and 1 omega subunit. When a sigma factor is associated with the core the holoenzyme is formed, which can initiate transcription.

The catalysed reaction is RNA(n) + a ribonucleoside 5'-triphosphate = RNA(n+1) + diphosphate. Promotes RNA polymerase assembly. Latches the N- and C-terminal regions of the beta' subunit thereby facilitating its interaction with the beta and alpha subunits. This Bartonella henselae (strain ATCC 49882 / DSM 28221 / CCUG 30454 / Houston 1) (Rochalimaea henselae) protein is DNA-directed RNA polymerase subunit omega.